A 399-amino-acid polypeptide reads, in one-letter code: CCA-adding enzyme (399 aa).

Glycine 33 and arginine 36 together coordinate ATP. The CTP site is built by glycine 33 and arginine 36. Residues aspartate 46 and aspartate 48 each contribute to the Mg(2+) site. 5 residues coordinate ATP: arginine 117, aspartate 160, arginine 163, arginine 166, and arginine 169. Residues arginine 117, aspartate 160, arginine 163, arginine 166, and arginine 169 each coordinate CTP.

The protein belongs to the tRNA nucleotidyltransferase/poly(A) polymerase family. Bacterial CCA-adding enzyme type 3 subfamily. Homodimer. Mg(2+) is required as a cofactor.

It carries out the reaction a tRNA precursor + 2 CTP + ATP = a tRNA with a 3' CCA end + 3 diphosphate. It catalyses the reaction a tRNA with a 3' CCA end + 2 CTP + ATP = a tRNA with a 3' CCACCA end + 3 diphosphate. Catalyzes the addition and repair of the essential 3'-terminal CCA sequence in tRNAs without using a nucleic acid template. Adds these three nucleotides in the order of C, C, and A to the tRNA nucleotide-73, using CTP and ATP as substrates and producing inorganic pyrophosphate. tRNA 3'-terminal CCA addition is required both for tRNA processing and repair. Also involved in tRNA surveillance by mediating tandem CCA addition to generate a CCACCA at the 3' terminus of unstable tRNAs. While stable tRNAs receive only 3'-terminal CCA, unstable tRNAs are marked with CCACCA and rapidly degraded. The chain is CCA-adding enzyme from Lactobacillus helveticus (strain DPC 4571).